Reading from the N-terminus, the 174-residue chain is uncharacterized protein (174 aa).

It belongs to the mimivirus L39/R874 family.

This is an uncharacterized protein from Acanthamoeba polyphaga (Amoeba).